The sequence spans 1457 residues: Ras guanine nucleotide exchange factor C (1457 aa).

One copy of the RCC1 1 repeat lies at M1–D55. Disordered stretches follow at residues F75 to N196, H209 to K264, E282 to P313, and Q376 to T404. 2 stretches are compositionally biased toward low complexity: residues T83 to N121 and S134 to T158. Basic and acidic residues-rich tracts occupy residues I171–Q188 and H209–E224. The segment covering N225–D237 has biased composition (acidic residues). Over residues S238–S249 the composition is skewed to basic and acidic residues. Low complexity-rich tracts occupy residues Q283–Q292 and Q376–Q403. RCC1 repeat units follow at residues G351 to S401, W432 to E483, G485 to Q549, and S590 to E647. Residues P650–N971 enclose the DH domain. The span at L703–P715 shows a compositional bias: low complexity. The interval L703–I762 is disordered. Residues N724 to G738 are compositionally biased toward basic and acidic residues. Low complexity predominate over residues H739–I762. The N-terminal Ras-GEF domain maps to G989–F1109. The disordered stretch occupies residues L1127 to T1210. Residues L1138–N1211 are a coiled coil. The segment covering N1142–T1210 has biased composition (low complexity). Residues Q1232–S1454 form the Ras-GEF domain.

In terms of biological role, promotes the exchange of Ras-bound GDP by GTP. In Dictyostelium discoideum (Social amoeba), this protein is Ras guanine nucleotide exchange factor C (gefC).